A 311-amino-acid polypeptide reads, in one-letter code: Probable manganese-dependent inorganic pyrophosphatase (311 aa).

Residues His-9, Asp-13, Asp-15, Asp-77, His-99, and Asp-151 each contribute to the Mn(2+) site.

Belongs to the PPase class C family. Mn(2+) serves as cofactor.

Its subcellular location is the cytoplasm. The enzyme catalyses diphosphate + H2O = 2 phosphate + H(+). This chain is Probable manganese-dependent inorganic pyrophosphatase, found in Streptococcus suis (strain 98HAH33).